A 781-amino-acid polypeptide reads, in one-letter code: Matrix non-peptidase homolog 1 (781 aa).

Positions 1–27 are cleaved as a signal peptide; it reads MTPPPASPSKKAKSSWLLIALIAVIIG. The N-linked (GlcNAc...) asparagine glycan is linked to N54. The segment covering 63–94 has biased composition (low complexity); sequence TSKATVSTTTTQSATTPSTTTTRIEETTTTTS. The interval 63–113 is disordered; it reads TSKATVSTTTTQSATTPSTTTTRIEETTTTTSGAFDESVKNSEASTSTIPT. N-linked (GlcNAc...) asparagine glycans are attached at residues N183, N341, N375, and N520.

The protein is Matrix non-peptidase homolog 1 (mnp-1) of Caenorhabditis elegans.